A 655-amino-acid chain; its full sequence is p-hydroxybenzoic acid efflux pump subunit AaeB (655 aa).

Transmembrane regions (helical) follow at residues 13–33 (FAVKLACAIVLALFIGFHFQL), 38–58 (WAVLTAAIVAAGPAFAAGGEP), 69–89 (LRIIGTFIGCIAALIIIISMI), 93–113 (LLMILVCCVWAGFCTWISSLV), 121–141 (WGLSGYTALIIVITIQTEPLL), 152–172 (EIVIGIGCAILADLLFSPRSI), 370–390 (LFWLWTGWTSGNGAMVMIAVV), 407–427 (FIYGTLAALPLGLLYFLVIIP), 431–451 (QSMLLLCLSLAVLGFFIGIEV), 459–479 (MGALASTINIIVLDNPMTFHF), and 482–502 (FLDSALGQIVGCMLAFIVILL).

It belongs to the aromatic acid exporter ArAE (TC 2.A.85) family.

It is found in the cell inner membrane. In terms of biological role, forms an efflux pump with AaeA. Could function as a metabolic relief valve, allowing to eliminate certain compounds when they accumulate to high levels in the cell. This chain is p-hydroxybenzoic acid efflux pump subunit AaeB, found in Salmonella agona (strain SL483).